Here is an 836-residue protein sequence, read N- to C-terminus: CUB domain-containing protein 1 (836 aa).

A signal peptide spans 1–29; sequence MAGLNCGVSIALLGVLLLGAARLPRGAEA. Residues 30–667 are Extracellular-facing; that stretch reads FEIALPRESN…TLTPRTVDLT (638 aa). 7 N-linked (GlcNAc...) asparagine glycosylation sites follow: N39, N122, N180, N205, N270, N310, and N386. The CUB domain maps to 417 to 544; that stretch reads CTDHRYCQRK…VSFIPYFKEE (128 aa). C476 and C499 are oxidised to a cystine. The helical transmembrane segment at 668-688 threads the bilayer; sequence VILIAAVGGGVLLLSALGLII. The Cytoplasmic portion of the chain corresponds to 689–836; sequence CCVKKKKKKT…NTQEPMEPAE (148 aa). The residue at position 734 (Y734) is a Phosphotyrosine. A disordered region spans residues 776 to 836; the sequence is PPTICSRAPT…NTQEPMEPAE (61 aa).

As to quaternary structure, interacts with CDH2/N-cadherin, CDH3/P-cadherin, SDC1/syndecan-1, SDC4/syndecan-4 and the serine protease ST14/MT-SP1. Also interacts with SRC and PRKCG/protein kinase C gamma. Post-translationally, phosphorylated on tyrosine by kinases of the SRC family such as SRC and YES as well as by the protein kinase C gamma/PRKCG. Dephosphorylated by phosphotyrosine phosphatases. Also phosphorylated by suramin, a heparin analog. Tyrosine phosphorylated in response to dissociation of integrin alpha-6 beta-4 from laminin-5. N-glycosylated. In terms of processing, a soluble form may also be produced by proteolytic cleavage at the cell surface (shedding). Another peptide of 80 kDa (p80) is present in cultured keratinocytes probably due to tryptic cleavage at an unidentified site on its N-terminal side. Converted to p80 by plasmin, a trypsin-like protease. Highly expressed in mitotic cells with low expression during interphase. Detected at highest levels in skeletal muscle and colon with lower levels in kidney, small intestine, placenta and lung. Up-regulated in a number of human tumor cell lines, as well as in colorectal cancer, breast carcinoma and lung cancer. Also expressed in cells with phenotypes reminiscent of mesenchymal stem cells and neural stem cells.

The protein resides in the cell membrane. It is found in the secreted. May be involved in cell adhesion and cell matrix association. May play a role in the regulation of anchorage versus migration or proliferation versus differentiation via its phosphorylation. May be a novel marker for leukemia diagnosis and for immature hematopoietic stem cell subsets. Belongs to the tetraspanin web involved in tumor progression and metastasis. This Homo sapiens (Human) protein is CUB domain-containing protein 1 (CDCP1).